Here is a 300-residue protein sequence, read N- to C-terminus: N-carbamoylputrescine amidase (300 aa).

Positions 8-266 constitute a CN hydrolase domain; it reads VTVAALQFAC…EAVLVAQFDL (259 aa). Glutamate 47 acts as the Proton acceptor in catalysis. Catalysis depends on lysine 120, which acts as the Proton donor. Cysteine 157 (nucleophile) is an active-site residue.

It belongs to the carbon-nitrogen hydrolase superfamily. Homooctamer.

It catalyses the reaction N-carbamoylputrescine + H2O + 2 H(+) = putrescine + NH4(+) + CO2. The protein operates within amine and polyamine biosynthesis; putrescine biosynthesis via agmatine pathway; putrescine from N-carbamoylputrescine (amidase route): step 1/1. Its function is as follows. Involved in polyamine biosynthesis. The polypeptide is N-carbamoylputrescine amidase (CPA) (Solanum tuberosum (Potato)).